A 340-amino-acid polypeptide reads, in one-letter code: MSELDQLRQEAEQLKNQIRDARKACADATLSQITANIDPVGRIQMRTRRTLRGHLAKIYAMHWGTDSRLLVSASQDGKLIIWDSYTTNKVHAIPLRSSWVMTCAYAPSGNYVACGGLDNICSIYNLKTREGNVRVSRELAGHTGYLSCCRFLDDNQIVTSSGDTTCALWDIETGQQTTTFAGHTGDVMSLSLAPDTRLFVSGACDASAKLWDVREGMCRQTFTGHESDINAICFFPNGNAFATGSDDATCRLFDLRADQELMVYSHDNIICGITSVAFSKSGRLLLAGYDDFNCNVWDALKADRAGVLAGHDNRVSCLGVTDDGMAVATGSWDSFLKIWN.

7 WD repeats span residues 53–83, 95–125, 141–170, 182–212, 224–254, 268–298, and 310–340; these read GHLAKIYAMHWGTDSRLLVSASQDGKLIIWD, LRSSWVMTCAYAPSGNYVACGGLDNICSIYN, GHTGYLSCCRFLDDNQIVTSSGDTTCALWD, GHTGDVMSLSLAPDTRLFVSGACDASAKLWD, GHESDINAICFFPNGNAFATGSDDATCRLFD, NIICGITSVAFSKSGRLLLAGYDDFNCNVWD, and GHDNRVSCLGVTDDGMAVATGSWDSFLKIWN.

The protein belongs to the WD repeat G protein beta family. In terms of assembly, g proteins are composed of 3 units, alpha, beta and gamma.

Its function is as follows. Guanine nucleotide-binding proteins (G proteins) are involved as a modulator or transducer in various transmembrane signaling systems. The beta and gamma chains are required for the GTPase activity, for replacement of GDP by GTP, and for G protein-effector interaction. The protein is Guanine nucleotide-binding protein G(I)/G(S)/G(T) subunit beta-1 (gnb1) of Danio rerio (Zebrafish).